The chain runs to 326 residues: Olfactory receptor 11H1 (326 aa).

The Extracellular segment spans residues 1–44 (MCPLTLQVTGLMNVSEPNSSFAFVNEFILQGFSCEWTIQIFLFS). Residues N13 and N18 are each glycosylated (N-linked (GlcNAc...) asparagine). Residues 45–65 (LFTTTYALTITGNGAIAFVLW) traverse the membrane as a helical segment. Residues 66–72 (CDRRLHT) are Cytoplasmic-facing. Residues 73–93 (PMYMFLGNFSFLEIWYVSSTV) traverse the membrane as a helical segment. Residues 94-112 (PKMLVNFLSEKKNISFAGC) lie on the Extracellular side of the membrane. N106 carries N-linked (GlcNAc...) asparagine glycosylation. C112 and C194 are joined by a disulfide. The chain crosses the membrane as a helical span at residues 113 to 133 (FLQFYFFFSLGTSECLLLTVM). The Cytoplasmic portion of the chain corresponds to 134-158 (AFDQYLAICRPLLYPNIMTGHLYAK). The helical transmembrane segment at 159–179 (LVILCWVCGFLWFLIPIVLIS) threads the bilayer. Over 180 to 216 (QMPFCGPNIIDHVVCDPGPRFALDCVSAPRIQLFCYT) the chain is Extracellular. Residues 217–237 (LSSLVIFGNFLFIIGSYTLVL) traverse the membrane as a helical segment. Residues 238–259 (KAMLGMPSSTGRHKAFSTCGSH) lie on the Cytoplasmic side of the membrane. The chain crosses the membrane as a helical span at residues 260-280 (LAVVSLCYSSLMVMYVSPGLG). Over 281–287 (HSTGMQK) the chain is Extracellular. The helical transmembrane segment at 288 to 308 (IETLFYAMVTPLFNPLIYSLQ) threads the bilayer. The Cytoplasmic portion of the chain corresponds to 309 to 326 (NKEIKAALRKVLGSSNII).

The protein belongs to the G-protein coupled receptor 1 family.

It is found in the cell membrane. Its function is as follows. Odorant receptor. This is Olfactory receptor 11H1 (OR11H1) from Homo sapiens (Human).